Here is a 214-residue protein sequence, read N- to C-terminus: UPF0111 protein MJ0629 (214 aa).

The protein belongs to the UPF0111 family.

The chain is UPF0111 protein MJ0629 from Methanocaldococcus jannaschii (strain ATCC 43067 / DSM 2661 / JAL-1 / JCM 10045 / NBRC 100440) (Methanococcus jannaschii).